We begin with the raw amino-acid sequence, 363 residues long: Probable butyrate kinase (363 aa).

This sequence belongs to the acetokinase family.

It localises to the cytoplasm. The enzyme catalyses butanoate + ATP = butanoyl phosphate + ADP. The polypeptide is Probable butyrate kinase (Maridesulfovibrio salexigens (strain ATCC 14822 / DSM 2638 / NCIMB 8403 / VKM B-1763) (Desulfovibrio salexigens)).